The following is a 338-amino-acid chain: Fructose-1,6-bisphosphatase class 1 1 (338 aa).

Residues glutamate 88, aspartate 107, leucine 109, and aspartate 110 each coordinate Mg(2+). Substrate-binding positions include 110 to 113 and asparagine 196; that span reads DGSS. Glutamate 268 is a binding site for Mg(2+).

It belongs to the FBPase class 1 family. As to quaternary structure, homotetramer. Mg(2+) is required as a cofactor.

The protein localises to the cytoplasm. It carries out the reaction beta-D-fructose 1,6-bisphosphate + H2O = beta-D-fructose 6-phosphate + phosphate. Its pathway is carbohydrate biosynthesis; Calvin cycle. This is Fructose-1,6-bisphosphatase class 1 1 from Bradyrhizobium sp. (strain BTAi1 / ATCC BAA-1182).